Consider the following 496-residue polypeptide: Adenosine transporter 1 (496 aa).

Topologically, residues 1-26 (MSSHTSTPNHASAAPPRKWYDMTSAE) are cytoplasmic. Residues 27 to 47 (FYVYVVAFMCGISMLMPINAV) form a helical membrane-spanning segment. The Extracellular portion of the chain corresponds to 48 to 77 (FSAPSYMLQYYLYATKDPNHVPQMTNFWSN). The helical transmembrane segment at 78–98 (VMTYYNLIGLVTGLVMEPLTL) threads the bilayer. Over 99–107 (LKSFRKIPM) the chain is Cytoplasmic. Residues 108-128 (LVRLLGGLCILIVEIIVLMAV) traverse the membrane as a helical segment. At 129 to 135 (PARGTTE) the chain is on the extracellular side. The chain crosses the membrane as a helical span at residues 136–156 (GGAVATMCIAGFIGGLGKSIF). The Cytoplasmic segment spans residues 157–172 (ESTVYGMFGAFPPSFT). A helical membrane pass occupies residues 173-193 (SIMMGGVGISGVLTSLIQIIV). At 194-208 (KAALPDTYEGVKKQS) the chain is on the extracellular side. A helical transmembrane segment spans residues 209 to 229 (YIYYSLDVGIQAATFIALIMM). Residues 230-336 (RFNSFAQLHF…SIISVLRSIK (107 aa)) lie on the Cytoplasmic side of the membrane. Residues 337-357 (WMFVSCAFVFVVTLFLFPGIA) form a helical membrane-spanning segment. Topologically, residues 358 to 365 (TGMFPESK) are extracellular. A helical transmembrane segment spans residues 366–386 (WFATVAVFIFNCCDVLGRVAP). The Cytoplasmic portion of the chain corresponds to 387–399 (ALRFMWPRSYNQR). The chain crosses the membrane as a helical span at residues 400-420 (WIIVAASFARVIFVPLLLLYS). Over 421-431 (YHYIPSEAYGY) the chain is Extracellular. The helical transmembrane segment at 432–452 (VIMVIFGFSSGYVASMSLTLG) threads the bilayer. Topologically, residues 453 to 464 (PQSKGIDNDGKR) are cytoplasmic. The helical transmembrane segment at 465–485 (FVAGTLMGISILVGGTIGTVL) threads the bilayer. At 486–496 (SIMTQTIREKY) the chain is on the extracellular side.

It belongs to the SLC29A/ENT transporter (TC 2.A.57) family.

The protein resides in the membrane. It catalyses the reaction adenosine(in) = adenosine(out). Adenosine transporter. The polypeptide is Adenosine transporter 1 (Crithidia fasciculata).